The sequence spans 477 residues: Ribulose bisphosphate carboxylase large chain (477 aa).

Residues 1–2 constitute a propeptide that is removed on maturation; the sequence is MS. Pro3 is subject to N-acetylproline. Residues Asn123 and Thr173 each coordinate substrate. The Proton acceptor role is filled by Lys175. Residue Lys177 participates in substrate binding. Mg(2+) contacts are provided by Lys201, Asp203, and Glu204. N6-carboxylysine is present on Lys201. His294 functions as the Proton acceptor in the catalytic mechanism. Arg295, His327, and Ser379 together coordinate substrate.

The protein belongs to the RuBisCO large chain family. Type I subfamily. As to quaternary structure, heterohexadecamer of 8 large chains and 8 small chains; disulfide-linked. The disulfide link is formed within the large subunit homodimers. Mg(2+) is required as a cofactor. In terms of processing, the disulfide bond which can form in the large chain dimeric partners within the hexadecamer appears to be associated with oxidative stress and protein turnover.

The protein localises to the plastid. Its subcellular location is the chloroplast. The catalysed reaction is 2 (2R)-3-phosphoglycerate + 2 H(+) = D-ribulose 1,5-bisphosphate + CO2 + H2O. It catalyses the reaction D-ribulose 1,5-bisphosphate + O2 = 2-phosphoglycolate + (2R)-3-phosphoglycerate + 2 H(+). Its function is as follows. RuBisCO catalyzes two reactions: the carboxylation of D-ribulose 1,5-bisphosphate, the primary event in carbon dioxide fixation, as well as the oxidative fragmentation of the pentose substrate in the photorespiration process. Both reactions occur simultaneously and in competition at the same active site. The polypeptide is Ribulose bisphosphate carboxylase large chain (Lolium perenne (Perennial ryegrass)).